A 163-amino-acid chain; its full sequence is MSKESSFDIVSKVDLSEVTNAINIALKEIKNRYDFKGSKSDISLDKDELVLISDDEFKLEQLKDVLIGKLIRRGVPTKNIQYGKIEPAAGGTVRQRAKLVQGIDKENAKKINTIIKNTGLKVKSQVQDDQIRVSGKSKDDLQKVIAAIREADLPIDVQFVNYR.

It belongs to the YajQ family.

Its function is as follows. Nucleotide-binding protein. This is Nucleotide-binding protein GWCH70_0711 from Geobacillus sp. (strain WCH70).